The primary structure comprises 398 residues: Putative defective protein IntQ (398 aa).

The 96-residue stretch at 51–146 (LTIKELAEKF…NLNAVFQFGV (96 aa)) folds into the Core-binding (CB) domain. The region spanning 167-378 (TIPDPLSREE…SENNNAQVAL (212 aa)) is the Tyr recombinase domain. Active-site residues include R202, K236, R331, and H354. Y364 acts as the O-(3'-phospho-DNA)-tyrosine intermediate in catalysis.

The protein belongs to the 'phage' integrase family.

In terms of biological role, integrase is necessary for integration of the phage into the host genome by site-specific recombination. In conjunction with excisionase, integrase is also necessary for excision of the prophage from the host genome. In Escherichia coli (strain K12), this protein is Putative defective protein IntQ (intQ).